The following is a 176-amino-acid chain: MIKKISIILITLFIIQLTKSVSVNKNNNNNNNNNNNNNNNNNNNNNNNYFIDHYNYDLDIDLTSQQQQQSSSSSSDAPLEPPSCGELCVCLYTELNYQGLSYEYSIYSGKVDLPPSIRNNITSFVSNADVCFITYDPYVTIQIYTGEFLSNFGIVFGDILQTLAPGLCKDLPPNQF.

The signal sequence occupies residues 1 to 20 (MIKKISIILITLFIIQLTKS). The interval 26–46 (NNNNNNNNNNNNNNNNNNNNN) is disordered. Residue asparagine 120 is glycosylated (N-linked (GlcNAc...) asparagine).

Belongs to the Dictyostelium gerABC family.

The protein resides in the secreted. This is an uncharacterized protein from Dictyostelium discoideum (Social amoeba).